The primary structure comprises 82 residues: Small ribosomal subunit protein uS17 (82 aa).

The protein belongs to the universal ribosomal protein uS17 family. As to quaternary structure, part of the 30S ribosomal subunit.

Its function is as follows. One of the primary rRNA binding proteins, it binds specifically to the 5'-end of 16S ribosomal RNA. The sequence is that of Small ribosomal subunit protein uS17 from Shewanella sediminis (strain HAW-EB3).